A 281-amino-acid polypeptide reads, in one-letter code: Large ribosomal subunit protein uL2 (281 aa).

The segment at 222 to 281 is disordered; that stretch reads TVRGSAMNPNDHPHGGGEGRQPIGRKSPMTPWGKRALGVKTRATKKASNQFIIRRRKETK.

It belongs to the universal ribosomal protein uL2 family. In terms of assembly, part of the 50S ribosomal subunit. Forms a bridge to the 30S subunit in the 70S ribosome.

Its function is as follows. One of the primary rRNA binding proteins. Required for association of the 30S and 50S subunits to form the 70S ribosome, for tRNA binding and peptide bond formation. It has been suggested to have peptidyltransferase activity; this is somewhat controversial. Makes several contacts with the 16S rRNA in the 70S ribosome. This is Large ribosomal subunit protein uL2 from Metamycoplasma hominis (strain ATCC 23114 / DSM 25592 / NBRC 14850 / NCTC 10111 / PG21) (Mycoplasma hominis).